The primary structure comprises 357 residues: MSVISFKIKVPASSANIGPGFDVLGIGLQLYLTITVTIDPSIDTSSDPHHALLSYEGDGKVPFESNENLITQTALYVMRCNGIKDFPRGTHIHVNNPIPLGRGLGSSASAIVAGVYLGNEIGNLKLDKYRLLDYCLMIERHPDNIAAAMLGGFIGSYLNELSSEDSQLTTVPLDYILPKVKNGELITPQDKIVSQQPPNNIGQYVEYKWNKKIKCLTIIPNFELSTDLSRSVLPKNYQLPDIVYNLQRIAILTTALTQDPPNHKVIYQSMKDKLHQPYRFGLIPGLNTVLQKITPESYPGLCGICLSGAGPTILCLATDGFEKIANDVIEIFKQEGIECDSKLLDLAYDGATVEYGS.

Belongs to the GHMP kinase family. Homoserine kinase subfamily. Homodimer.

The catalysed reaction is L-homoserine + ATP = O-phospho-L-homoserine + ADP + H(+). The protein operates within amino-acid biosynthesis; L-threonine biosynthesis; L-threonine from L-aspartate: step 4/5. Its function is as follows. Commits homoserine to the threonine biosynthesis pathway by catalyzing its O-phosphorylation. In Candida albicans (strain SC5314 / ATCC MYA-2876) (Yeast), this protein is Homoserine kinase (THR1).